The sequence spans 184 residues: Glucosamine 6-phosphate N-acetyltransferase (184 aa).

The N-acetyltransferase domain maps to 39–184; that stretch reads LVLRPLCTAD…ENYMCRRFLK (146 aa). Substrate contacts are provided by residues Thr-61, 108–111, and 120–122; these read KFIH and EDV. 130-135 provides a ligand contact to acetyl-CoA; that stretch reads GKQLGK. 151–152 contacts substrate; the sequence is YK. An acetyl-CoA-binding site is contributed by 165–167; that stretch reads YKK. 2 residues coordinate substrate: Glu-175 and Arg-181.

It belongs to the acetyltransferase family. GNA1 subfamily. Homodimer. Ubiquitous. Shows a strong differential expression pattern in adult hematopoietic precursor cells.

It is found in the golgi apparatus membrane. It localises to the endosome membrane. It carries out the reaction D-glucosamine 6-phosphate + acetyl-CoA = N-acetyl-D-glucosamine 6-phosphate + CoA + H(+). It participates in nucleotide-sugar biosynthesis; UDP-N-acetyl-alpha-D-glucosamine biosynthesis; N-acetyl-alpha-D-glucosamine 1-phosphate from alpha-D-glucosamine 6-phosphate (route I): step 1/2. The polypeptide is Glucosamine 6-phosphate N-acetyltransferase (Gnpnat1) (Mus musculus (Mouse)).